The primary structure comprises 102 residues: Pole-localizer protein TmaR (102 aa).

Residues 7-34 are a coiled coil; sequence IINQARRKNKLKRELQDNQKKIRDNQKR.

It belongs to the pole-localizer TmaR family.

The protein resides in the cytoplasm. Pole-localizer protein involved in the regulation of several cellular processes. The chain is Pole-localizer protein TmaR from Aliivibrio salmonicida (strain LFI1238) (Vibrio salmonicida (strain LFI1238)).